A 78-amino-acid chain; its full sequence is Delta-conotoxin-like Ai6.1 (78 aa).

A signal peptide spans 1 to 22 (MKLTCVMIVAVLFLTAWTFATA). The propeptide occupies 23-49 (DDPRNGLGNLFSNAHHEMKNPEASKLN). Cystine bridges form between cysteine 53-cysteine 68, cysteine 60-cysteine 72, and cysteine 67-cysteine 77.

The protein belongs to the conotoxin O1 superfamily. In terms of tissue distribution, expressed by the venom duct.

The protein resides in the secreted. In terms of biological role, delta-conotoxins bind to site 6 of voltage-gated sodium channels (Nav) and inhibit the inactivation process. This Conus ammiralis (Admiral cone) protein is Delta-conotoxin-like Ai6.1.